The sequence spans 346 residues: UDP-N-acetylenolpyruvoylglucosamine reductase (346 aa).

The region spanning 18 to 189 (LHAQARAFIA…VSVVFALKTH (172 aa)) is the FAD-binding PCMH-type domain. The active site involves Arg165. Ser240 (proton donor) is an active-site residue. The active site involves Glu336.

It belongs to the MurB family. Requires FAD as cofactor.

The protein resides in the cytoplasm. The enzyme catalyses UDP-N-acetyl-alpha-D-muramate + NADP(+) = UDP-N-acetyl-3-O-(1-carboxyvinyl)-alpha-D-glucosamine + NADPH + H(+). It functions in the pathway cell wall biogenesis; peptidoglycan biosynthesis. In terms of biological role, cell wall formation. This Neisseria gonorrhoeae (strain ATCC 700825 / FA 1090) protein is UDP-N-acetylenolpyruvoylglucosamine reductase.